Consider the following 25-residue polypeptide: Galactose-binding lectin-2 (25 aa).

Homodimer. Post-translationally, N-glycosylated.

In terms of biological role, D-galactose specific lectin. Binds in decreasing order of affinity: melibiose, N-acetyllactosamine, D-galacturonic acid, D-galactose, methyl-alpha-D-galactoside, D-galactose, methyl-alpha-D-galactopyranoside, methyl-beta-D-galactopyranoside and lactose. Binds also the glycoproteins globotriose, asialofetuin and mucin. Possesses glycan-dependent cytotoxic activity against Burkitt's lymphoma Raji cells and erythroleukemia K562 cells. Has calcium-independent hemagglutinating activity towards human erythrocytes. This Aplysia kurodai (Kuroda's sea hare) protein is Galactose-binding lectin-2.